Here is a 242-residue protein sequence, read N- to C-terminus: Tryptophan synthase alpha chain (242 aa).

Catalysis depends on proton acceptor residues Glu-31 and Asp-42.

It belongs to the TrpA family. As to quaternary structure, tetramer of two alpha and two beta chains.

The enzyme catalyses (1S,2R)-1-C-(indol-3-yl)glycerol 3-phosphate + L-serine = D-glyceraldehyde 3-phosphate + L-tryptophan + H2O. The protein operates within amino-acid biosynthesis; L-tryptophan biosynthesis; L-tryptophan from chorismate: step 5/5. In terms of biological role, the alpha subunit is responsible for the aldol cleavage of indoleglycerol phosphate to indole and glyceraldehyde 3-phosphate. The sequence is that of Tryptophan synthase alpha chain from Staphylococcus aureus (strain USA300).